Here is a 96-residue protein sequence, read N- to C-terminus: Co-chaperonin GroES (96 aa).

It belongs to the GroES chaperonin family. In terms of assembly, heptamer of 7 subunits arranged in a ring. Interacts with the chaperonin GroEL.

It is found in the cytoplasm. Functionally, together with the chaperonin GroEL, plays an essential role in assisting protein folding. The GroEL-GroES system forms a nano-cage that allows encapsulation of the non-native substrate proteins and provides a physical environment optimized to promote and accelerate protein folding. GroES binds to the apical surface of the GroEL ring, thereby capping the opening of the GroEL channel. This Coxiella burnetii (strain Dugway 5J108-111) protein is Co-chaperonin GroES.